The sequence spans 505 residues: Deoxyguanosinetriphosphate triphosphohydrolase (505 aa).

One can recognise an HD domain in the interval 66–273; sequence RLTHSMEVQQ…MEAADDISYC (208 aa).

Belongs to the dGTPase family. Type 1 subfamily. As to quaternary structure, homotetramer. Mg(2+) is required as a cofactor.

It carries out the reaction dGTP + H2O = 2'-deoxyguanosine + triphosphate + H(+). Functionally, dGTPase preferentially hydrolyzes dGTP over the other canonical NTPs. The protein is Deoxyguanosinetriphosphate triphosphohydrolase of Escherichia coli O7:K1 (strain IAI39 / ExPEC).